The chain runs to 126 residues: MRHRKSGRQLNRNSSHRKAMFSNMASSLVRHEIIKTTLPKAKELRRVVEPLITLAKTDSVANRRLAFARTRDNEVVAKLFTELGPRFAQRAGGYTRILKCGFRAGDKAPMAYIELVDRPEVEADAE.

This sequence belongs to the bacterial ribosomal protein bL17 family. As to quaternary structure, part of the 50S ribosomal subunit. Contacts protein L32.

In Aliivibrio fischeri (strain ATCC 700601 / ES114) (Vibrio fischeri), this protein is Large ribosomal subunit protein bL17.